The sequence spans 462 residues: Cytochrome P450 20A1 (462 aa).

The helical transmembrane segment at 4–24 (FAIFAVTFLLALVGAVLYLYP) threads the bilayer. Cys409 contributes to the heme binding site.

It belongs to the cytochrome P450 family. It depends on heme as a cofactor.

It is found in the membrane. This chain is Cytochrome P450 20A1 (Cyp20a1), found in Mus musculus (Mouse).